Here is a 2058-residue protein sequence, read N- to C-terminus: Protein Daple (2058 aa).

The Calponin-homology (CH) domain maps to 11-131 (HFLESPLVTW…KILLLMLGCA (121 aa)). Coiled-coil stretches lie at residues 195 to 221 (HLKRLIDERDECKEVIVDLTQERDYLQ), 247 to 428 (EDKK…SMNE), 455 to 1016 (ELNE…LRGA), 1043 to 1082 (ELLKFKDRTIELERNNAALQAEKKLFREQLQHLESHNLNL), and 1108 to 1388 (ANLQ…KFYD). Disordered regions lie at residues 1406–1444 (LIKPKKEPSRESVKSPTDVQSKTMDNAEMAASPSSMRPL), 1480–1592 (HRMS…EDMI), 1617–1655 (TKNRESPVNRNSLHLYDYPEKKNSSRTPTRPRPGSPGSE), 1696–1724 (LHPSSQSPSPTLHLKDPSQTAVPKSLPSA), 1831–1857 (YSATSSSQSPEPQALSPHGAMGSRGNS), 1940–1959 (LALPKEETTPPQPAPSASSL), and 1988–2051 (PVRP…PQTV). Residues 1409-1418 (PKKEPSRESV) are compositionally biased toward basic and acidic residues. Polar residues predominate over residues 1419–1429 (KSPTDVQSKTM). The segment covering 1494–1506 (GPEHLSRSRRMES) has biased composition (basic and acidic residues). The segment covering 1552–1577 (NAGSSRVPWTSSLEVSRSASNSSSPL) has biased composition (polar residues). 2 consecutive short sequence motifs (GBA) follow at residues 1653 to 1675 (GSEMVTLEEFLQESSRQSPPSRR) and 1676 to 1697 (HSLNDSELITLHQFLFEAETLH). A compositionally biased stretch (polar residues) spans 1831–1841 (YSATSSSQSPE). Residues 2039–2048 (PASPDPSADP) are compositionally biased toward low complexity. The PDZ-binding signature appears at 2055–2058 (YGCV).

The protein belongs to the CCDC88 family. Interacts with dvl2/dsh via the PDZ-binding motif. As to expression, expressed weakly in gastrulae, with slightly stronger expression in the dorsal region. In neurulae, expressed in the neural plate with strong expression in the presumptive mesencephalic region. At the tailbud stage, expressed in somatic cells and in part of the tail. Also strongly expressed in regions of the head including eye vesicles, otic vesicles, olfactory placode and the pharyngeal cavity.

It localises to the cytoplasm. Its subcellular location is the cell junction. Its function is as follows. Positive regulator of Wnt signaling, acting synergistically with dvl2/dsh. Functions upstream of ctnnb1/beta-catenin in the canonical Wnt pathway, and also activates jnk in the Wnt/planar cell polarity (PCP) pathway. Acts as a non-receptor guanine nucleotide exchange factor which binds to and activates guanine nucleotide-binding protein G(i) alpha subunits. This promotes apical cell constriction and subsequent bending of the neural plate during neurulation via arhgef18. The polypeptide is Protein Daple (ccdc88c) (Xenopus laevis (African clawed frog)).